The chain runs to 229 residues: 7-cyano-7-deazaguanine synthase (229 aa).

Residue 7–17 (LSGGLDSTTVL) coordinates ATP. Residues Cys-191, Cys-204, Cys-207, and Cys-210 each contribute to the Zn(2+) site.

It belongs to the QueC family. Requires Zn(2+) as cofactor.

The catalysed reaction is 7-carboxy-7-deazaguanine + NH4(+) + ATP = 7-cyano-7-deazaguanine + ADP + phosphate + H2O + H(+). It functions in the pathway purine metabolism; 7-cyano-7-deazaguanine biosynthesis. In terms of biological role, catalyzes the ATP-dependent conversion of 7-carboxy-7-deazaguanine (CDG) to 7-cyano-7-deazaguanine (preQ(0)). The protein is 7-cyano-7-deazaguanine synthase of Cyanothece sp. (strain PCC 7425 / ATCC 29141).